Reading from the N-terminus, the 240-residue chain is Ion-translocating oxidoreductase complex subunit E (240 aa).

The next 5 membrane-spanning stretches (helical) occupy residues 41-61 (LGLG…VSLV), 71-91 (LPAF…LMQA), 95-115 (ELYQ…VILG), 130-150 (SFDG…LGGL), and 184-204 (GFLL…LIAL).

The protein belongs to the NqrDE/RnfAE family. In terms of assembly, the complex is composed of six subunits: RnfA, RnfB, RnfC, RnfD, RnfE and RnfG.

Its subcellular location is the cell inner membrane. Functionally, part of a membrane-bound complex that couples electron transfer with translocation of ions across the membrane. The polypeptide is Ion-translocating oxidoreductase complex subunit E (Pseudomonas aeruginosa (strain ATCC 15692 / DSM 22644 / CIP 104116 / JCM 14847 / LMG 12228 / 1C / PRS 101 / PAO1)).